Consider the following 536-residue polypeptide: Glycine--tRNA ligase (536 aa).

Residues 56-67 (LVSPAGAPSTFE) are insert. Arg106 and Glu213 together coordinate substrate. ATP is bound by residues 245 to 247 (RNE), 255 to 260 (FRSREF), and 333 to 334 (EL). 260 to 264 (FEQME) is a substrate binding site. The interval 350-372 (EGKLDPATNPMTVELNEHGKPKH) is insert. 396–400 (EPSAG) contacts substrate. 400-403 (GADR) contributes to the ATP binding site.

The protein belongs to the class-II aminoacyl-tRNA synthetase family. In terms of assembly, homodimer.

Its subcellular location is the cytoplasm. The catalysed reaction is tRNA(Gly) + glycine + ATP = glycyl-tRNA(Gly) + AMP + diphosphate. Its function is as follows. Catalyzes the attachment of glycine to tRNA(Gly). The polypeptide is Glycine--tRNA ligase (Rhodopirellula baltica (strain DSM 10527 / NCIMB 13988 / SH1)).